Reading from the N-terminus, the 151-residue chain is MVDESNAGPVAPAVVADAEVKAPTGKKRSSSRPQKAPPEPAQPKMPAAKRRGYSEQERSEKLRLIETKVSEGNTLKDAIKSAGISEQTYYHWKGAAKSAAREDIERTRPLSAGDEFAELVQLEEENQRLRKQLAEKLRTENTELRKRLGLD.

Residues 1–65 (MVDESNAGPV…QERSEKLRLI (65 aa)) are disordered. The segment covering 7-23 (AGPVAPAVVADAEVKAP) has biased composition (low complexity). Over residues 52 to 65 (GYSEQERSEKLRLI) the composition is skewed to basic and acidic residues.

It belongs to the SyrB family.

In Rhizobium meliloti (strain 1021) (Ensifer meliloti), this protein is Probable transcriptional regulator syrB3 (syrB3).